Consider the following 33-residue polypeptide: Phospholipase A2 homolog BmarPLA2 (33 aa).

Belongs to the phospholipase A2 family. Group II subfamily. K49 sub-subfamily. In terms of assembly, homodimer; non-covalently linked. As to expression, expressed by the venom gland.

It localises to the secreted. Functionally, snake phospholipase A2 homolog that lacks enzymatic activity. May display myotoxin activity. In isolated heart decreases cardiac frequency. Also decreases mean arterial pressure. Does not show antimicrobial activity. Does not change renal parameters (such as perfusion pressure, renal vascular resistance, urinary flow, glomerular filtration rate and sodium tubular transport). This chain is Phospholipase A2 homolog BmarPLA2, found in Bothrops marajoensis (Marajo lancehead).